The chain runs to 130 residues: Small ribosomal subunit protein uS9 (130 aa).

A disordered region spans residues 109 to 130 (RAKERKKYGLYGARRSPQFTKR).

It belongs to the universal ribosomal protein uS9 family.

The polypeptide is Small ribosomal subunit protein uS9 (Malacoplasma penetrans (strain HF-2) (Mycoplasma penetrans)).